A 185-amino-acid chain; its full sequence is Ribosome-recycling factor (185 aa).

The protein belongs to the RRF family.

It localises to the cytoplasm. In terms of biological role, responsible for the release of ribosomes from messenger RNA at the termination of protein biosynthesis. May increase the efficiency of translation by recycling ribosomes from one round of translation to another. This chain is Ribosome-recycling factor, found in Wolbachia pipientis wMel.